Reading from the N-terminus, the 219-residue chain is Protein DMP5 (219 aa).

Residues 1 to 24 (MSALRLRNANTPAPELDELSDQTP) are disordered. 4 helical membrane passes run 51–71 (LSNL…PVFT), 82–102 (FLTA…SFTD), 142–162 (MRFV…AVAL), and 182–202 (VLDI…MVFP).

The protein belongs to the plant DMP1 protein family.

The protein resides in the endoplasmic reticulum membrane. In terms of biological role, involved in membrane remodeling. The sequence is that of Protein DMP5 from Arabidopsis thaliana (Mouse-ear cress).